The primary structure comprises 1960 residues: Nuclear pore complex protein Nup98-Nup96 (1960 aa).

46 consecutive repeat copies span residues 2–3 (FG), 9–10 (FG), 18–19 (FG), 30–31 (FG), 35–36 (FG), 43–44 (FG), 59–60 (FG), 73–74 (FG), 81–82 (FG), 92–93 (FG), 105–106 (FG), 117–118 (FG), 125–126 (FG), 135–136 (FG), 148–149 (FG), 160–161 (FG), 163–164 (FG), 174–175 (FG), 264–265 (FG), 266–267 (FG), 282–283 (FG), 293–294 (FG), 304–305 (FG), 309–310 (FG), 319–320 (FG), 333–334 (FG), 352–353 (FG), 358–359 (FG), 365–366 (FG), 377–378 (FG), 384–385 (FG), 387–388 (FG), 400–401 (FG), 413–414 (FG), 426–427 (FG), 428–429 (FG), 441–442 (FG), 454–455 (FG), 467–468 (FG), 493–494 (FG), 496–497 (FG), 516–517 (FG), 527–528 (FG), 546–547 (FG), 553–554 (FG), and 565–566 (FG). The interval 2-566 (FGGAKPSFGA…GGSLGGGGFG (565 aa)) is 46 X 2 AA repeats of F-G. 2 disordered regions span residues 698-768 (KSVE…WLHP) and 781-860 (TGMD…AANQ). Over residues 704–718 (NPSSSIGSAPNTPQS) the composition is skewed to polar residues. A compositionally biased stretch (basic and acidic residues) spans 755 to 768 (ESQDNGRRESWLHP). Polar residues-rich tracts occupy residues 781-794 (TGMD…STLN) and 806-850 (RPSS…SNRS). The region spanning 886 to 1028 (RVGYYTIPSL…GSWVFRVKHF (143 aa)) is the Peptidase S59 domain. The Nucleophile role is filled by Ser-1029.

Belongs to the nucleoporin GLFG family. Part of the nuclear pore complex (NPC). Interacts with Rae1. Nuclear pore complex protein Nup98: Interacts with pzg and Chro. Interacts with MBD-R2; the interaction allows Nup98 recruitment to chromatin. Interacts with Trx. Interacts with Wds. Interacts with Mgtor and Cp190. Upon ecdysone stimulation, interacts with EcR, CTCF, su(Hw) and Trl. In terms of processing, isoform A and isoform C are autoproteolytically cleaved to yield Nup98 and Nup96 or Nup98 only, respectively. As to expression, expressed in brain.

It localises to the chromosome. It is found in the nucleus. Its subcellular location is the nucleoplasm. The protein localises to the nucleus membrane. The protein resides in the nuclear pore complex. Part of the nuclear pore complex (NPC). Required for MAD import as part of the Nup107-160 complex and required for nuclear export of Moe probably via its association with Rae1. Plays a role in nuclear mRNA export. Promotes cell antiviral response by up-regulating FoxK-dependent antiviral gene transcription. In germline stem cells, involved in their maintenance and division together with the TGF-Beta and EGFR signaling pathways. In larval lymph glands, has a role in the maintenance of hematopoiesis by regulating Pvr expression. In terms of biological role, part of the nuclear pore complex (NPC). In the nucleoplasm, binds to transcriptionally active chromatin with a preference for regulatory regions; co-localizes with RNA polymerase II in a RNA-independent manner and before transition into transcription elongation. Plays a role in the transcriptional memory process by stabilizing enhancer-promoter loops and by mediating anchoring of chromatin to the nuclear pore complex region. During larval development, interacts with trx and MBD-R2 and regulates transcription of developmental genes including ecdysone-responsive genes such as Eip74 and E23. Its function is as follows. Part of the nuclear pore complex (NPC). The protein is Nuclear pore complex protein Nup98-Nup96 of Drosophila melanogaster (Fruit fly).